Consider the following 2346-residue polypeptide: N-benzoylphenylalaninol synthetase apmA (2346 aa).

The adenylation 1 stretch occupies residues 263 to 652 (ESAAQKSPDA…GRKDLQVKIR (390 aa)). In terms of domain architecture, Carrier 1 spans 784–860 (MPTTTTEMTL…DMAKAMTSTR (77 aa)). The residue at position 821 (Ser-821) is an O-(pantetheine 4'-phosphoryl)serine. The interval 896–1306 (QDAYPCSPLQ…ISPQDKENLL (411 aa)) is condensation. The adenylation 2 stretch occupies residues 1330-1713 (SQPNAPAICA…GRKDTQVKIR (384 aa)). The 83-residue stretch at 1842 to 1924 (SALRASEDKA…GLAAFIDAEL (83 aa)) folds into the Carrier 2 domain. Ser-1883 carries the post-translational modification O-(pantetheine 4'-phosphoryl)serine. A reductase (R) domain region spans residues 1960–2311 (VTGGTGFLGT…RNVQFLVEAG (352 aa)).

This sequence belongs to the NRP synthetase family.

It catalyses the reaction benzoate + L-phenylalanine + 2 AH2 + 2 ATP = N-benzoyl-L-phenylalaninol + 2 A + 2 AMP + 2 diphosphate + H(+). Its pathway is secondary metabolite biosynthesis. In terms of biological role, nonribosomal peptide synthase; part of the gene cluster that mediates the biosynthesis of asperphenamate, a rare linear amino acid ester that exhibits antitumor activity towards a number of cell lines. The structure of asperphenamate contains two subunits, N-benzoylphenylalanine and N-benzoylphenylalaninol, which are connected by an inter-molecular ester bond. The first step of asperphenamate biosynthesis is the generation of N-benzoylphenylalaninol by the nonribosomal peptide synthase apmA. Using phenylalanine and benzoic acid as substrates, apmA catalyzes amide bond formation and tethers the intermediate into the NRPS chain. Then, the terminal R domain of apmA catalyzes the reduction reaction to get the shunt product N-benzoylphenylalaninol. Subsequently, the nonribosomal peptide synthase apmB activates the same substrates as does apmA (phenylalanine and benzoic acid) to produce N-benzoylphenylalanine before condensing N-benzoylphenylalanine and N-benzoylphenylalaninol to release asperphenamate. In Penicillium brevicompactum, this protein is N-benzoylphenylalaninol synthetase apmA.